The primary structure comprises 150 residues: Arginine repressor (150 aa).

Belongs to the ArgR family.

Its subcellular location is the cytoplasm. Its pathway is amino-acid biosynthesis; L-arginine biosynthesis [regulation]. Its function is as follows. Regulates arginine biosynthesis genes. In Clostridium beijerinckii (strain ATCC 51743 / NCIMB 8052) (Clostridium acetobutylicum), this protein is Arginine repressor.